A 484-amino-acid chain; its full sequence is UDP-N-acetylmuramate--L-alanine ligase (484 aa).

An ATP-binding site is contributed by 126–132 (GTHGKTT).

It belongs to the MurCDEF family.

It localises to the cytoplasm. The catalysed reaction is UDP-N-acetyl-alpha-D-muramate + L-alanine + ATP = UDP-N-acetyl-alpha-D-muramoyl-L-alanine + ADP + phosphate + H(+). It functions in the pathway cell wall biogenesis; peptidoglycan biosynthesis. Its function is as follows. Cell wall formation. The protein is UDP-N-acetylmuramate--L-alanine ligase of Aeromonas hydrophila subsp. hydrophila (strain ATCC 7966 / DSM 30187 / BCRC 13018 / CCUG 14551 / JCM 1027 / KCTC 2358 / NCIMB 9240 / NCTC 8049).